The sequence spans 142 residues: Large ribosomal subunit protein uL11 (142 aa).

It belongs to the universal ribosomal protein uL11 family. As to quaternary structure, part of the ribosomal stalk of the 50S ribosomal subunit. Interacts with L10 and the large rRNA to form the base of the stalk. L10 forms an elongated spine to which L12 dimers bind in a sequential fashion forming a multimeric L10(L12)X complex. One or more lysine residues are methylated.

Forms part of the ribosomal stalk which helps the ribosome interact with GTP-bound translation factors. The protein is Large ribosomal subunit protein uL11 of Vibrio vulnificus (strain YJ016).